A 1061-amino-acid polypeptide reads, in one-letter code: NACHT, LRR and PYD domains-containing protein 12 (1061 aa).

Positions 1–95 (MLRTAGRDGL…WERGQREDLV (95 aa)) constitute a Pyrin domain. The FISNA domain maps to 129-201 (YRDYVRRKFR…SPIKIETLFE (73 aa)). One can recognise an NACHT domain in the interval 211 to 528 (RTVVMQGAAG…EFFAAMYYIL (318 aa)). 217 to 224 (GAAGIGKS) contributes to the ATP binding site. LRR repeat units follow at residues 828 to 848 (HLVE…RLLC), 857 to 878 (RLRT…ELAS), 885 to 906 (SLRE…LLCE), 914 to 935 (KLQT…GLSV), 942 to 962 (NLRE…WLLA), 971 to 992 (RLQK…NLYF), 999 to 1020 (TLTD…LLCK), and 1028 to 1049 (KLRV…RLAA).

The protein belongs to the NLRP family. Interacts (via pyrin domain) with ASC. Interacts (via pyrin domain) with FAF1 (via UBA domain). Interacts with MAP3K14; this interaction promotes proteasomal degradation of MAP3K14. Interacts with NOD2; this interaction promotes degradation of NOD2 through the ubiquitin-proteasome pathway. Interacts with HSPA1A and HSPA8. Interacts with HSP90AA1. Interacts with TRIM25; this interaction inhibits RIGI-mediated signaling pathway. In terms of tissue distribution, detected only in peripheral blood leukocytes, predominantly in eosinophils and granulocytes, and at lower levels in monocytes.

Its subcellular location is the cytoplasm. Functionally, plays an essential role as an potent mitigator of inflammation. Primarily expressed in dendritic cells and macrophages, inhibits both canonical and non-canonical NF-kappa-B and ERK activation pathways. Functions as a negative regulator of NOD2 by targeting it to degradation via the proteasome pathway. In turn, promotes bacterial tolerance. Also inhibits the RIGI-mediated immune signaling against RNA viruses by reducing the E3 ubiquitin ligase TRIM25-mediated 'Lys-63'-linked RIGI activation but enhancing the E3 ubiquitin ligase RNF125-mediated 'Lys-48'-linked RIGI degradation. Also acts as a negative regulator of inflammatory response to mitigate obesity and obesity-associated diseases in adipose tissue. The polypeptide is NACHT, LRR and PYD domains-containing protein 12 (NLRP12) (Homo sapiens (Human)).